The sequence spans 587 residues: A-type ATP synthase subunit A (587 aa).

234 to 241 contributes to the ATP binding site; that stretch reads GPFGSGKT.

This sequence belongs to the ATPase alpha/beta chains family. The N-terminus (approximately residues 106-122) interacts with subunit H. Has multiple subunits with at least A(3), B(3), C, D, E(1 or 2), F, H(2), I and proteolipid K(x).

The protein resides in the cell membrane. The catalysed reaction is ATP + H2O + 4 H(+)(in) = ADP + phosphate + 5 H(+)(out). Its activity is regulated as follows. ATP hydrolysis is inhibited by N',N'-dicyclohexylcarbodiimide. In terms of biological role, component of the A-type ATP synthase that produces ATP from ADP in the presence of a proton gradient across the membrane. The A chain is the catalytic subunit. Hydrolyzes ATP, GTP (86% of ATPase rate) and UTP (54% of ATPase rate), has very poor activity on CTP. This is A-type ATP synthase subunit A from Methanocaldococcus jannaschii (strain ATCC 43067 / DSM 2661 / JAL-1 / JCM 10045 / NBRC 100440) (Methanococcus jannaschii).